The primary structure comprises 222 residues: Probable GTP-binding protein EngB (222 aa).

The EngB-type G domain maps to 27-202 (TGIEVAFAGR…AKKLDEWFLG (176 aa)). Residues 35-42 (GRSNAGKS), 61-65 (GRTQL), 81-84 (DLPG), 148-151 (TKAD), and 181-183 (FSS) contribute to the GTP site. Positions 42 and 63 each coordinate Mg(2+).

It belongs to the TRAFAC class TrmE-Era-EngA-EngB-Septin-like GTPase superfamily. EngB GTPase family. The cofactor is Mg(2+).

Functionally, necessary for normal cell division and for the maintenance of normal septation. The chain is Probable GTP-binding protein EngB from Pseudoalteromonas translucida (strain TAC 125).